A 354-amino-acid chain; its full sequence is Protein-arginine kinase (354 aa).

Residues 24–254 (IVLSSRIRLA…QQIIQQEKMA (231 aa)) enclose the Phosphagen kinase C-terminal domain. Residues 27 to 31 (SSRIR), His92, Arg125, 176 to 180 (RASVM), and 207 to 212 (RGIYGE) contribute to the ATP site. The RDXXRA motif of the pArg binding pocket involved in allosteric regulation signature appears at 337–342 (RDYRRA).

The protein belongs to the ATP:guanido phosphotransferase family.

The catalysed reaction is L-arginyl-[protein] + ATP = N(omega)-phospho-L-arginyl-[protein] + ADP + H(+). Appears to be allosterically activated by the binding of pArg-containing polypeptides to the pArg-binding pocket localized in the C-terminal domain of McsB. In terms of biological role, catalyzes the specific phosphorylation of arginine residues in a large number of proteins. Is part of the bacterial stress response system. Protein arginine phosphorylation has a physiologically important role and is involved in the regulation of many critical cellular processes, such as protein homeostasis, motility, competence, and stringent and stress responses, by regulating gene expression and protein activity. The polypeptide is Protein-arginine kinase (Bacillus anthracis (strain A0248)).